The sequence spans 1442 residues: Trafficking protein particle complex subunit 10 (1442 aa).

The span at 1-23 (MSNVSPNSMNLNGSTSSTASVND) shows a compositional bias: polar residues. 6 disordered regions span residues 1-86 (MSNV…SSSS), 251-277 (TSSGNNKDKDNDNGGGSSGTGLSTSTK), 535-564 (GSSSSNTPSSTSATTAANGKNTPMPSNSGI), 1208-1238 (LSSSTSPSSATDSSNSNGNNNNNNNNNNHSK), 1316-1335 (QQQQKESNNDNGNEKQQKQQ), and 1422-1442 (LQDNNNNNNNSINSQTSTNKT). The segment covering 39-86 (SSSSASSISNSNSSSSNNLKPSTQPLSSSSTLNTPTQFSLQHSSSSSS) has biased composition (low complexity). Positions 535–553 (GSSSSNTPSSTSATTAANG) are enriched in low complexity. A compositionally biased stretch (polar residues) spans 554 to 564 (KNTPMPSNSGI). The span at 1208–1236 (LSSSTSPSSATDSSNSNGNNNNNNNNNNH) shows a compositional bias: low complexity. Residues 1425–1442 (NNNNNNNSINSQTSTNKT) are compositionally biased toward low complexity.

This sequence belongs to the TMEM1 family. As to quaternary structure, part of the multisubunit TRAPP (transport protein particle) complex.

The protein localises to the golgi apparatus. The protein resides in the cis-Golgi network. Functionally, may play a role in vesicular transport from endoplasmic reticulum to Golgi. This Dictyostelium discoideum (Social amoeba) protein is Trafficking protein particle complex subunit 10 (trapcc10-1).